Here is a 1694-residue protein sequence, read N- to C-terminus: Homeobox-DDT domain protein RLT2 (1694 aa).

The disordered stretch occupies residues 1–24 (MEGGSEKTTPEGCGGESKSKRKMK). The homeobox DNA-binding region spans 17-76 (SKSKRKMKTAAQLEVLENTYSAEPYPSEAIRADLSVKLNLSDRQLQMWFCHRRLKERKST). The 60-residue stretch at 514 to 573 (DENVANLLMVWRFLITFADVLGLWPFTLDEFAQAFHDYDPRLMGEIHIVLLKTIIKDIEG) folds into the DDT domain. The region spanning 696–765 (GTVKFAAFHV…APSTYCVRAS (70 aa)) is the HTH HARE-type domain. The span at 795–816 (EDVDDAERDEDSESDVGEDPEV) shows a compositional bias: acidic residues. Disordered stretches follow at residues 795–822 (EDVD…NLKK), 1450–1541 (KQEE…ICNE), 1555–1639 (AKTS…MNMK), and 1655–1674 (EDSY…AATR). Phosphoserine is present on residues Ser-806 and Ser-808. Residues 1459-1470 (GLGGVSSSGRGG) show a composition bias toward gly residues. Basic residues-rich tracts occupy residues 1471 to 1485 (RPPR…RGNG) and 1515 to 1531 (GGRK…RKRP). Acidic residues-rich tracts occupy residues 1561–1578 (DNDD…DDGE), 1589–1605 (EDYD…DFDG), and 1624–1635 (DEYEEEEEEEED).

As to quaternary structure, interacts with CHR11. Interacts (via the DDT domain) with CHR11 (via C-terminus). As to expression, highly expressed in growing tissues such as inflorescence and flower meristems, young leaves and floral organs. Expressed in roots, rosette and cauline leaves, stems, flowers, inflorescences and siliques.

It is found in the nucleus. Its function is as follows. Transcriptional regulator required for the maintenance of the plant vegetative phase. In association with CHR11 or CHR17 may prevent the early activation of the vegetative-to-reproductive transition by regulating key genes that contribute to flower timing, such as FT, SEP1, SEP3, AGL8/FUL, SOC1 and FLC. Involved in the transcriptional regulation of seed-specific gene expression. This is Homeobox-DDT domain protein RLT2 from Arabidopsis thaliana (Mouse-ear cress).